A 472-amino-acid polypeptide reads, in one-letter code: Coenzyme F(430) synthetase (472 aa).

Gly-119–Ser-125 contacts ATP.

This sequence belongs to the MurCDEF family.

The enzyme catalyses 15,17(3)-seco-F430-17(3)-acid + ATP = coenzyme F430 + ADP + phosphate. In terms of biological role, involved in the biosynthesis of the unique nickel-containing tetrapyrrole coenzyme F430, the prosthetic group of methyl-coenzyme M reductase (MCR), which plays a key role in methanogenesis and anaerobic methane oxidation. Catalyzes the activation the g-propionate side chain of 15,17(3)-seco-F430-17(3)-acid (seco-F430) for intramolecular C-C bond formation to yield the carbocyclic F ring of coenzyme F430. The protein is Coenzyme F(430) synthetase of Methanosarcina acetivorans (strain ATCC 35395 / DSM 2834 / JCM 12185 / C2A).